Here is a 185-residue protein sequence, read N- to C-terminus: MEDNNLVSFDQGWFVIQTYAGYERKVKEDLLERAELYNMADKILRVEIPTETIRTEVNGKMKEVEENLFPGYVLVEMNMTDEAWFIVRNTPNVTGFVGSHGNRSKPTPLFEQEIQDILVGMGKVVREIDFDVFVGKRVRIVDGAFSGFEAPITEINGDKLTLTVDMFGRATPVELDMHQIEDIQA.

One can recognise a KOW domain in the interval 134–164 (VGKRVRIVDGAFSGFEAPITEINGDKLTLTV).

This sequence belongs to the NusG family.

Functionally, participates in transcription elongation, termination and antitermination. This chain is Transcription termination/antitermination protein NusG, found in Lactococcus lactis subsp. lactis (strain IL1403) (Streptococcus lactis).